The following is a 682-amino-acid chain: Potassium-transporting ATPase ATP-binding subunit (682 aa).

The next 4 helical transmembrane spans lie at 34-54 (PVMFVVWASSVLTTLLTLAMV), 58-78 (IAGSALFTGVISLWLWFTVLF), 219-239 (IALTILLIALTIVFLLATATL), and 254-274 (VLVALLVCLIPTTIGGLLSAI). The active-site 4-aspartylphosphate intermediate is the Asp307. Residues Asp344, Glu348, 377 to 384 (FTAQSRMS), and Lys395 each bind ATP. Mg(2+) contacts are provided by Asp518 and Asp522. 3 helical membrane passes run 588–608 (FAIIPAAFAATYPQLNALNVM), 616–636 (AILSAVIFNALIIIFLIPLAL), and 662–682 (LVVPFIGIKVIDVLLTLLGLA).

The protein belongs to the cation transport ATPase (P-type) (TC 3.A.3) family. Type IA subfamily. As to quaternary structure, the system is composed of three essential subunits: KdpA, KdpB and KdpC.

It localises to the cell inner membrane. The catalysed reaction is K(+)(out) + ATP + H2O = K(+)(in) + ADP + phosphate + H(+). Part of the high-affinity ATP-driven potassium transport (or Kdp) system, which catalyzes the hydrolysis of ATP coupled with the electrogenic transport of potassium into the cytoplasm. This subunit is responsible for energy coupling to the transport system and for the release of the potassium ions to the cytoplasm. This is Potassium-transporting ATPase ATP-binding subunit from Salmonella choleraesuis (strain SC-B67).